The primary structure comprises 159 residues: Ribosomal RNA large subunit methyltransferase H (159 aa).

S-adenosyl-L-methionine contacts are provided by residues Leu76, Gly107, and 126-131 (LSKLTM).

Belongs to the RNA methyltransferase RlmH family. In terms of assembly, homodimer.

It is found in the cytoplasm. The catalysed reaction is pseudouridine(1915) in 23S rRNA + S-adenosyl-L-methionine = N(3)-methylpseudouridine(1915) in 23S rRNA + S-adenosyl-L-homocysteine + H(+). Functionally, specifically methylates the pseudouridine at position 1915 (m3Psi1915) in 23S rRNA. The polypeptide is Ribosomal RNA large subunit methyltransferase H (Acinetobacter baumannii (strain SDF)).